The primary structure comprises 229 residues: Uracil-DNA glycosylase (229 aa).

The active-site Proton acceptor is the Asp-64.

The protein belongs to the uracil-DNA glycosylase (UDG) superfamily. UNG family.

The protein localises to the cytoplasm. The catalysed reaction is Hydrolyzes single-stranded DNA or mismatched double-stranded DNA and polynucleotides, releasing free uracil.. Its function is as follows. Excises uracil residues from the DNA which can arise as a result of misincorporation of dUMP residues by DNA polymerase or due to deamination of cytosine. In Escherichia coli O45:K1 (strain S88 / ExPEC), this protein is Uracil-DNA glycosylase.